The chain runs to 306 residues: Acetyl-coenzyme A carboxylase carboxyl transferase subunit beta (306 aa).

The 270-residue stretch at 25–294 (LWIKDPTSGE…VVTPSPPSPT (270 aa)) folds into the CoA carboxyltransferase N-terminal domain. The interval 284-306 (AVVTPSPPSPTDSQTSLSKTKAA) is disordered.

It belongs to the AccD/PCCB family. As to quaternary structure, acetyl-CoA carboxylase is a heterohexamer composed of biotin carboxyl carrier protein (AccB), biotin carboxylase (AccC) and two subunits each of ACCase subunit alpha (AccA) and ACCase subunit beta (AccD).

The protein localises to the cytoplasm. It carries out the reaction N(6)-carboxybiotinyl-L-lysyl-[protein] + acetyl-CoA = N(6)-biotinyl-L-lysyl-[protein] + malonyl-CoA. It participates in lipid metabolism; malonyl-CoA biosynthesis; malonyl-CoA from acetyl-CoA: step 1/1. Functionally, component of the acetyl coenzyme A carboxylase (ACC) complex. Biotin carboxylase (BC) catalyzes the carboxylation of biotin on its carrier protein (BCCP) and then the CO(2) group is transferred by the transcarboxylase to acetyl-CoA to form malonyl-CoA. In Bartonella tribocorum (strain CIP 105476 / IBS 506), this protein is Acetyl-coenzyme A carboxylase carboxyl transferase subunit beta.